The following is a 240-amino-acid chain: Penton protein H240R (240 aa).

The protein belongs to the asfivirus H240R family.

The protein localises to the virion. Functionally, forms the penton at the fivefold vertices of the icosahedral capsid. Together with the minor capsid proteins (p17, p49, and M1249L), forms a complicated network immediately below the outer capsid shell, stabilizing the whole capsid. The polypeptide is Penton protein H240R (African swine fever virus (strain Badajoz 1971 Vero-adapted) (Ba71V)).